A 360-amino-acid polypeptide reads, in one-letter code: Histidinol-phosphate aminotransferase (360 aa).

N6-(pyridoxal phosphate)lysine is present on Lys-222.

It belongs to the class-II pyridoxal-phosphate-dependent aminotransferase family. Histidinol-phosphate aminotransferase subfamily. It depends on pyridoxal 5'-phosphate as a cofactor.

It catalyses the reaction L-histidinol phosphate + 2-oxoglutarate = 3-(imidazol-4-yl)-2-oxopropyl phosphate + L-glutamate. It participates in amino-acid biosynthesis; L-histidine biosynthesis; L-histidine from 5-phospho-alpha-D-ribose 1-diphosphate: step 7/9. The protein is Histidinol-phosphate aminotransferase of Haloarcula marismortui (strain ATCC 43049 / DSM 3752 / JCM 8966 / VKM B-1809) (Halobacterium marismortui).